A 122-amino-acid chain; its full sequence is MTEEADFSEQITDGKNKSNVRCQFCNCLMLKAQEGTYNQEEVDVPLMTQKQDRTADSLNSEPLKDFWLVKDMMTFENIGFSNTVDGRKFLVCADCERGPVGYHDLSTRHCYLALKRVVHKDT.

The region spanning 9-120 is the MSS4 domain; the sequence is EQITDGKNKS…YLALKRVVHK (112 aa). The Zn(2+) site is built by C22, C25, C92, and C95.

It belongs to the DSS4/MSS4 family. In terms of assembly, interacts with Rab8.

The protein resides in the basal cell membrane. Its function is as follows. Guanine-nucleotide-releasing protein that acts on members of the sec4/ypt1/rab subfamily such as Rab8. During egg development, essential for establishing and maintaining epithelial cell polarity by regulating the correct polarized deposition of basal membrane (BM) proteins such as trol/Pcan and vkg/Coll IV to the basal surface of follicular epithelial (FE) cells. Likely to function by restricting the activity of the vesicle transport regulator Rab8 to the basal membrane, and thus directs BM protein-containing vesicles to the basal side of the FE cells. This function is independent of the Crag/Rab10 regulation of polarized BM protein secretion in the FE. The chain is Guanine nucleotide exchange factor MSS4 homolog from Drosophila melanogaster (Fruit fly).